The chain runs to 225 residues: Ribonuclease 3 (225 aa).

Residues Ile5 to Asp127 enclose the RNase III domain. Residue Glu40 participates in Mg(2+) binding. Residue Asp44 is part of the active site. Asp113 and Glu116 together coordinate Mg(2+). Glu116 is a catalytic residue. One can recognise a DRBM domain in the interval Asp154–Asn224.

This sequence belongs to the ribonuclease III family. As to quaternary structure, homodimer. Mg(2+) serves as cofactor.

The protein localises to the cytoplasm. It catalyses the reaction Endonucleolytic cleavage to 5'-phosphomonoester.. Its function is as follows. Digests double-stranded RNA. Involved in the processing of primary rRNA transcript to yield the immediate precursors to the large and small rRNAs (23S and 16S). Processes some mRNAs, and tRNAs when they are encoded in the rRNA operon. Processes pre-crRNA and tracrRNA of type II CRISPR loci if present in the organism. The polypeptide is Ribonuclease 3 (Vibrio atlanticus (strain LGP32) (Vibrio splendidus (strain Mel32))).